The chain runs to 248 residues: E3 ubiquitin-protein ligase BIG BROTHER (248 aa).

An RING-type; atypical zinc finger spans residues 197 to 238 (CVICQLKYKIGERQMNLPCKHVYHSECISKWLSINKVCPVCN).

As to quaternary structure, interacts with the E2 ubiquitin conjugating enzyme UBC10 via the RING domain. Interacts with DA1. Post-translationally, auto-ubiquitinated. In terms of tissue distribution, mostly expressed in inflorescence, and, to a lower extent, in seedlings, roots, stems, leaves and siliques.

The catalysed reaction is S-ubiquitinyl-[E2 ubiquitin-conjugating enzyme]-L-cysteine + [acceptor protein]-L-lysine = [E2 ubiquitin-conjugating enzyme]-L-cysteine + N(6)-ubiquitinyl-[acceptor protein]-L-lysine.. The protein operates within protein modification; protein ubiquitination. Its function is as follows. E3 ubiquitin-protein ligase that limits organ size, and possibly seed size, in a dose-dependent manner. Negatively regulates the duration of cell proliferation in leaves and petals independently of the major phytohormones (e.g. auxin, cytokinin, gibberellin, brassinosteroids, ethylene, abscisic acid, jasmonic acid), probably by targeting growth stimulators for degradation. Limits the proliferation of root meristematic cells. Polyubiquitinates DA1. Involved in the promotion of leaf senescence, in addition to its function in restricting plant growth. Possesses E3 ubiquitin-protein ligase activity in vitro. This Arabidopsis thaliana (Mouse-ear cress) protein is E3 ubiquitin-protein ligase BIG BROTHER (BB).